Consider the following 530-residue polypeptide: Autoinducer-2 kinase (530 aa).

It belongs to the FGGY kinase family.

It is found in the cytoplasm. The catalysed reaction is (S)-4,5-dihydroxypentane-2,3-dione + ATP = (2S)-2-hydroxy-3,4-dioxopentyl phosphate + ADP + H(+). In terms of biological role, catalyzes the phosphorylation of autoinducer-2 (AI-2) to phospho-AI-2, which subsequently inactivates the transcriptional regulator LsrR and leads to the transcription of the lsr operon. Phosphorylates the ring-open form of (S)-4,5-dihydroxypentane-2,3-dione (DPD), which is the precursor to all AI-2 signaling molecules, at the C5 position. The protein is Autoinducer-2 kinase of Salmonella paratyphi B (strain ATCC BAA-1250 / SPB7).